The chain runs to 805 residues: Angiotensin-converting enzyme 2 (805 aa).

Positions Met-1–Ala-17 are cleaved as a signal peptide. Over Gln-18–Thr-740 the chain is Extracellular. The 589-residue stretch at Ser-19–Ser-607 folds into the Peptidase M2 domain. N-linked (GlcNAc...) asparagine glycosylation is found at Asn-53, Asn-82, and Asn-90. Cys-133 and Cys-141 are joined by a disulfide. Arg-169 contributes to the chloride binding site. Residue Arg-273 coordinates substrate. Asn-299 is a glycosylation site (N-linked (GlcNAc...) asparagine). Residues Cys-344 and Cys-361 are joined by a disulfide bond. A substrate-binding site is contributed by His-345–Pro-346. Residue His-374 participates in Zn(2+) binding. Residue Glu-375 is the Proton acceptor of the active site. 2 residues coordinate Zn(2+): His-378 and Glu-402. An N-linked (GlcNAc...) asparagine glycan is attached at Asn-432. Trp-477 and Lys-481 together coordinate chloride. His-505 (proton donor) is an active-site residue. Residue Tyr-515 coordinates substrate. Cys-530 and Cys-542 are disulfide-bonded. N-linked (GlcNAc...) asparagine glycosylation is found at Asn-546 and Asn-601. The Collectrin-like domain occupies Ala-614–Phe-805. The essential for cleavage by ADAM17 stretch occupies residues Arg-652 to Lys-659. Residues Asn-660 and Asn-690 are each glycosylated (N-linked (GlcNAc...) asparagine). Residues Arg-697–Gly-716 are essential for cleavage by TMPRSS11D and TMPRSS2. A helical membrane pass occupies residues Ile-741–Ile-761. Residues Val-762–Phe-805 lie on the Cytoplasmic side of the membrane. The tract at residues Lys-771–Phe-805 is disordered. Positions Glu-778–Ile-786 match the LIR motif. At Tyr-781 the chain carries Phosphotyrosine. The Endocytic sorting signal signature appears at Tyr-781–Met-784. The SH2-binding signature appears at Tyr-781–Asp-785. The residue at position 783 (Ser-783) is a Phosphoserine. Lys-788 participates in a covalent cross-link: Glycyl lysine isopeptide (Lys-Gly) (interchain with G-Cter in ubiquitin). Positions Asn-792–Phe-795 match the PTB motif. Positions Ala-793–Phe-805 are enriched in polar residues. Residues Thr-803–Phe-805 carry the PDZ-binding motif.

Belongs to the peptidase M2 family. In terms of assembly, homodimer. Interacts with the catalytically active form of TMPRSS2. Interacts with SLC6A19; this interaction is essential for expression and function of SLC6A19 in intestine. Interacts with ITGA5:ITGB1. Probably interacts (via endocytic sorting signal motif) with AP2M1; the interaction is inhibited by phosphorylation of Tyr-781. Interacts (via PDZ-binding motif) with NHERF1 (via PDZ domains); the interaction may enhance ACE2 membrane residence. Zn(2+) serves as cofactor. Requires chloride as cofactor. Glycosylated. In terms of processing, proteolytic cleavage by ADAM17 generates a secreted form. Also cleaved by serine proteases: TMPRSS2, TMPRSS11D and HPN/TMPRSS1. Post-translationally, phosphorylated. Phosphorylation at Tyr-781 probably inhibits interaction with AP2M1 and enables interactions with proteins containing SH2 domains. Ubiquitinated. Ubiquitinated on Lys-788 via 'Lys-48'-linked ubiquitin. 'Lys-48'-linked deubiquitinated by USP50 on the Lys-788; leading to its stabilization. Expressed in heart, kidney and forebrain. In testis, expression is restricted to Leydig cells. In heart, expressed in endothelial cells from small and large arteries, arterial smooth muscle cells, and myocytes (at protein level). Ubiquitously expressed, with highest levels in ileum, bladder and lung.

The protein resides in the secreted. It localises to the cell membrane. Its subcellular location is the cytoplasm. The protein localises to the cell projection. It is found in the cilium. The protein resides in the apical cell membrane. It catalyses the reaction angiotensin II + H2O = angiotensin-(1-7) + L-phenylalanine. The enzyme catalyses angiotensin I + H2O = angiotensin-(1-9) + L-leucine. The catalysed reaction is bradykinin(1-8) + H2O = bradykinin(1-7) + L-phenylalanine. It carries out the reaction neurotensin + H2O = neurotensin-(1-12) + L-leucine. It catalyses the reaction kinetensin + H2O = kinetensin-(1-8) + L-leucine. The enzyme catalyses dynorphin A-(1-13) + H2O = dynorphin A-(1-12) + L-lysine. The catalysed reaction is apelin-13 + H2O = apelin-12 + L-phenylalanine. It carries out the reaction [Pyr1]apelin-13 + H2O = [Pyr1]apelin-12 + L-phenylalanine. It catalyses the reaction apelin-17 + H2O = apelin-16 + L-phenylalanine. With respect to regulation, activated by chloride and fluoride, but not bromide. Inhibited by MLN-4760, cFP_Leu, and EDTA, but not by the ACE inhibitors linosipril, captopril, enalaprilat. Its function is as follows. Essential counter-regulatory carboxypeptidase of the renin-angiotensin hormone system that is a critical regulator of blood volume, systemic vascular resistance, and thus cardiovascular homeostasis. Converts angiotensin I to angiotensin 1-9, a nine-amino acid peptide with anti-hypertrophic effects in cardiomyocytes, and angiotensin II to angiotensin 1-7, which then acts as a beneficial vasodilator and anti-proliferation agent, counterbalancing the actions of the vasoconstrictor angiotensin II. Also removes the C-terminal residue from three other vasoactive peptides, neurotensin, kinetensin, and des-Arg bradykinin, but is not active on bradykinin. Also cleaves other biological peptides, such as apelins, casomorphins and dynorphin A. Plays an important role in amino acid transport by acting as binding partner of amino acid transporter SLC6A19 in intestine, regulating trafficking, expression on the cell surface, and its catalytic activity. This is Angiotensin-converting enzyme 2 (Ace2) from Rattus norvegicus (Rat).